The primary structure comprises 92 residues: Cell division topological specificity factor (92 aa).

It belongs to the MinE family.

Prevents the cell division inhibition by proteins MinC and MinD at internal division sites while permitting inhibition at polar sites. This ensures cell division at the proper site by restricting the formation of a division septum at the midpoint of the long axis of the cell. The chain is Cell division topological specificity factor from Syntrophobacter fumaroxidans (strain DSM 10017 / MPOB).